Consider the following 260-residue polypeptide: Coiled-coil domain-containing protein 127 (260 aa).

Positions 49–135 (QKEVEKEREA…QVMQEKRQVQ (87 aa)) form a coiled coil.

This Homo sapiens (Human) protein is Coiled-coil domain-containing protein 127 (CCDC127).